Here is an 89-residue protein sequence, read N- to C-terminus: ATP synthase subunit e, mitochondrial (89 aa).

The residue at position 1 (Ser-1) is an N-acetylserine. A helical transmembrane segment spans residues 8 to 25; that stretch reads YSSLAAGIVYGAYHTYTL.

F-type ATP synthases have 2 components, the catalytic core F(1) and the membrane-embedded component F(0), linked together by a central stalk and a peripheral stalk. The central stalk, also called rotor shaft, is often seen as part of F(1). The peripheral stalk is seen as part of F(0). F(0) contains the membrane channel next to the rotor. F-type ATP synthases form dimers but each monomer functions independently in ATP generation. The dimer consists of 18 different polypeptides: ATP1 (subunit alpha, part of F(1), 3 molecules per monomer), ATP2 (subunit beta, part of F(1), 3 molecules per monomer), ATP3 (subunit gamma, part of the central stalk), ATP4 (subunit b, part of the peripheral stalk), ATP5/OSCP (subunit 5/OSCP, part of the peripheral stalk), ATP6 (subunit a, part of the peripheral stalk), ATP7 (subunit d, part of the peripheral stalk), ATP8 (subunit 8, part of the peripheral stalk), OLI1 (subunit c, part of the rotor, 10 molecules per monomer), ATP14 (subunit h, part of the peripheral stalk), ATP15 (subunit epsilon, part of the central stalk), ATP16 (subunit delta, part of the central stalk), ATP17 (subunit f, part of the peripheral stalk), ATP18 (subunit i/j, part of the peripheral stalk). Dimer-specific subunits are ATP19 (subunit k, at interface between monomers), ATP20 (subunit g, at interface between monomers), TIM11 (subunit e, at interface between monomers). Also contains subunit L.

Its subcellular location is the mitochondrion inner membrane. Functionally, mitochondrial membrane ATP synthase (F(1)F(0) ATP synthase or Complex V) produces ATP from ADP in the presence of a proton gradient across the membrane which is generated by electron transport complexes of the respiratory chain. F-type ATP synthases consist of two structural domains, F(1) - containing the extramembraneous catalytic core, and F(0) - containing the membrane proton channel, linked together by a central stalk and a peripheral stalk. During catalysis, ATP synthesis in the catalytic domain of F(1) is coupled via a rotary mechanism of the central stalk subunits to proton translocation. Part of the complex F(0) domain. Minor subunit located with subunit a/ATP6 in the membrane. Together with subunit g/ATP20, probably contributes to membrane curvature at the site of the ATP synthase dimer, ultimately contributing to formation of cristae. This is ATP synthase subunit e, mitochondrial from Pichia angusta (Yeast).